Consider the following 243-residue polypeptide: Adenosylcobinamide-GDP ribazoletransferase (243 aa).

A run of 5 helical transmembrane segments spans residues 31–51 (LLFY…FNTL), 55–75 (APLM…SGGL), 109–129 (IAVV…LALI), 133–153 (ASVW…GLFL), and 188–208 (VLLA…CFFW).

The protein belongs to the CobS family. It depends on Mg(2+) as a cofactor.

Its subcellular location is the cell inner membrane. It catalyses the reaction alpha-ribazole + adenosylcob(III)inamide-GDP = adenosylcob(III)alamin + GMP + H(+). The enzyme catalyses alpha-ribazole 5'-phosphate + adenosylcob(III)inamide-GDP = adenosylcob(III)alamin 5'-phosphate + GMP + H(+). Its pathway is cofactor biosynthesis; adenosylcobalamin biosynthesis; adenosylcobalamin from cob(II)yrinate a,c-diamide: step 7/7. In terms of biological role, joins adenosylcobinamide-GDP and alpha-ribazole to generate adenosylcobalamin (Ado-cobalamin). Also synthesizes adenosylcobalamin 5'-phosphate from adenosylcobinamide-GDP and alpha-ribazole 5'-phosphate. In Pseudomonas syringae pv. syringae (strain B728a), this protein is Adenosylcobinamide-GDP ribazoletransferase.